We begin with the raw amino-acid sequence, 1010 residues long: 2-oxoglutarate dehydrogenase-like, mitochondrial (1010 aa).

A mitochondrion-targeting transit peptide spans 1–73 (MSQLRLLPSR…RSVHKSWDSF (73 aa)). Positions 130, 143, and 145 each coordinate Ca(2+). Arg299, Asp398, Asn431, Ile433, and Gln663 together coordinate thiamine diphosphate. Residues Asp398, Asn431, and Ile433 each coordinate Mg(2+).

The protein belongs to the alpha-ketoglutarate dehydrogenase family. In terms of assembly, the OGDHC complex comprises multiple copies of three catalytic enzyme components, the 2-oxoglutarate dehydrogenase (OGDH/E1), the dihydrolipoamide dehydrogenase (DLST/E2) and the dihydrolipoamide dehydrogenase (DLD/E3). OGDHL/E1-like isoenzyme may replace OGDH in the OGDHC complex in the brain. The presence of either ODGH/E1 or ODGHL/E1-like isoenzyme in the complex may depend on its tissular distribution. Thiamine diphosphate is required as a cofactor. The cofactor is Mg(2+).

It localises to the mitochondrion matrix. It carries out the reaction N(6)-[(R)-lipoyl]-L-lysyl-[protein] + 2-oxoglutarate + H(+) = N(6)-[(R)-S(8)-succinyldihydrolipoyl]-L-lysyl-[protein] + CO2. 2-oxoglutarate dehydrogenase (E1-like) component of the 2-oxoglutarate dehydrogenase multienzyme complex (OGDHC) which mediates the decarboxylation of alpha-ketoglutarate in the tricarboxylic acid cycle. The OGDHC complex catalyzes the overall conversion of 2-oxoglutarate to succinyl-CoA and CO(2) while reducing NAD(+) to NADH. The OGDHC complex is mainly active in the mitochondrion. Involved in the inhibition of cell proliferation and in apoptosis. This is 2-oxoglutarate dehydrogenase-like, mitochondrial (OGDHL) from Pongo abelii (Sumatran orangutan).